Here is a 511-residue protein sequence, read N- to C-terminus: 2,3-bisphosphoglycerate-independent phosphoglycerate mutase (511 aa).

D14 and S64 together coordinate Mn(2+). S64 serves as the catalytic Phosphoserine intermediate. Residues H125, 155 to 156 (RD), R187, R193, 259 to 262 (RADR), and K333 each bind substrate. Mn(2+) is bound by residues D400, H404, D441, H442, and H460.

This sequence belongs to the BPG-independent phosphoglycerate mutase family. In terms of assembly, monomer. The cofactor is Mn(2+).

It catalyses the reaction (2R)-2-phosphoglycerate = (2R)-3-phosphoglycerate. It functions in the pathway carbohydrate degradation; glycolysis; pyruvate from D-glyceraldehyde 3-phosphate: step 3/5. Its function is as follows. Catalyzes the interconversion of 2-phosphoglycerate and 3-phosphoglycerate. This Idiomarina loihiensis (strain ATCC BAA-735 / DSM 15497 / L2-TR) protein is 2,3-bisphosphoglycerate-independent phosphoglycerate mutase.